The chain runs to 27 residues: Cationic protein C1 (27 aa).

The protein localises to the secreted. It is found in the nematocyst. The protein is Cationic protein C1 of Bunodosoma caissarum (Sea anemone).